We begin with the raw amino-acid sequence, 1029 residues long: Protein SUPPRESSOR OF PHYA-105 1 (1029 aa).

The interval 42–69 (SETANSDCPGSSAHRNVDLTKPPPPEEA) is disordered. Positions 188-529 (VQMKTPVSSS…ARDILKSELI (342 aa)) constitute a Protein kinase domain. ATP is bound by residues 194–202 (VSSSNFSQL) and Lys216. Residues 213 to 269 (VVGKNQETPPEFVSDQDLGSKEKKLDISKSPTPHDVLPLKSSPKGNGMVSHGDGNHS) form a disordered region. Over residues 230 to 239 (LGSKEKKLDI) the composition is skewed to basic and acidic residues. Asp316 serves as the catalytic Proton acceptor. The tract at residues 347–392 (EDLNRRRPVVEESSSGGRDSKKRKMDLHLNSPGNQLQATSTGRPFK) is disordered. Over residues 377–388 (SPGNQLQATSTG) the composition is skewed to polar residues. The stretch at 557 to 589 (VQKKKKASKLLQDIQTLEDDIKEAERRYSSNVS) forms a coiled coil. The interval 653-679 (ARSDKTLKDRDRCSENQNENQDMSTKG) is disordered. The span at 654-666 (RSDKTLKDRDRCS) shows a compositional bias: basic and acidic residues. The segment covering 667-679 (ENQNENQDMSTKG) has biased composition (polar residues). WD repeat units follow at residues 714-753 (NSASVVCSLSFDPDEEHIAAAGISKKIKIFDFNAFMNESV), 763-803 (VNKS…GFSQ), 806-846 (EHQK…SLGT), 848-888 (WSPA…TPWC), 892-930 (GHEKAVSYVKFMDSETIVSASTDNSLKLWNLNKTNSSGL), 932-971 (PGACSLTYKGHTNQKNFVGLSVLDGYIACGSETNEVYSYY), and 997-1029 (DNGQFVSSVCWRKKSNMLVAANSTGNMKLLKLV). Residues 866-881 (LAFGSADYKVYCYDLR) carry the DWD box motif.

As to quaternary structure, interacts with CO, COP1, HFR1, HY5 and PHYA. Light induces dissociation of the SPA1/COP1 complex. Binds to CRY1 in response to blue light, this interaction prevents SPA1/COP1 complex formation but stimulate CRY2/COP1 complex, and thus avoid COP1-dependent degradation of the transcription factor HY5 by the proteasome and promotes hypocotyl elongation.

The protein localises to the nucleus speckle. The protein resides in the nucleus. It localises to the PML body. Functionally, controls normal photoperiodic flowering and regulates circadian rhythms. Required for suppression of photomorphogenesis in dark-grown seedlings and for normal elongation growth of adult plants. Integral component of the COP1/SPA E3 ubiquitin-protein ligase complex. Involved in HY5, HFR1, LAF1 and CO degradation. The chain is Protein SUPPRESSOR OF PHYA-105 1 (SPA1) from Arabidopsis thaliana (Mouse-ear cress).